Reading from the N-terminus, the 340-residue chain is Lipase chaperone (340 aa).

A helical membrane pass occupies residues 4–24; the sequence is ILLLIPLAFAASLAWFVWLEP. The segment at 29-51 is disordered; sequence ETAPPASPQAGADRAPPAASAGE. Positions 36–51 are enriched in low complexity; it reads PQAGADRAPPAASAGE.

Belongs to the lipase chaperone family.

It is found in the cell inner membrane. Functionally, may be involved in the folding of the extracellular lipase during its passage through the periplasm. This chain is Lipase chaperone (lifO), found in Pseudomonas aeruginosa (strain ATCC 15692 / DSM 22644 / CIP 104116 / JCM 14847 / LMG 12228 / 1C / PRS 101 / PAO1).